The sequence spans 268 residues: Phosphatidylglycerol--prolipoprotein diacylglyceryl transferase (268 aa).

The next 7 helical transmembrane spans lie at 27 to 47 (PALR…MWLL), 66 to 86 (LLFY…VLFY), 104 to 124 (GGMS…YIAW), 130 to 150 (FFAV…AGRI), 181 to 201 (PSQL…LYWF), 208 to 228 (VGAV…IVET), and 242 to 262 (FMTM…YLIL). Residue arginine 149 coordinates a 1,2-diacyl-sn-glycero-3-phospho-(1'-sn-glycerol).

Belongs to the Lgt family.

The protein localises to the cell inner membrane. The catalysed reaction is L-cysteinyl-[prolipoprotein] + a 1,2-diacyl-sn-glycero-3-phospho-(1'-sn-glycerol) = an S-1,2-diacyl-sn-glyceryl-L-cysteinyl-[prolipoprotein] + sn-glycerol 1-phosphate + H(+). It participates in protein modification; lipoprotein biosynthesis (diacylglyceryl transfer). Catalyzes the transfer of the diacylglyceryl group from phosphatidylglycerol to the sulfhydryl group of the N-terminal cysteine of a prolipoprotein, the first step in the formation of mature lipoproteins. The sequence is that of Phosphatidylglycerol--prolipoprotein diacylglyceryl transferase from Shewanella sp. (strain ANA-3).